The chain runs to 342 residues: Ribosomal RNA small subunit methyltransferase H (342 aa).

Residues 42-44, Asp61, Phe88, Asp119, and Gln126 each bind S-adenosyl-L-methionine; that span reads GGH.

It belongs to the methyltransferase superfamily. RsmH family.

Its subcellular location is the cytoplasm. It carries out the reaction cytidine(1402) in 16S rRNA + S-adenosyl-L-methionine = N(4)-methylcytidine(1402) in 16S rRNA + S-adenosyl-L-homocysteine + H(+). Functionally, specifically methylates the N4 position of cytidine in position 1402 (C1402) of 16S rRNA. This Corynebacterium jeikeium (strain K411) protein is Ribosomal RNA small subunit methyltransferase H.